We begin with the raw amino-acid sequence, 526 residues long: MYDNLPPEIWTNIISYTNEFNLLFTNSNFFSLFNLINTKINIIEHVIKREHLSVQKYIDQLKKNCNEIVSKKFFNDLTLNECLFISCKRGRNDFVKYFVSKGANIRSRDNFAIKLACEHGHIEVVKYLIDNGVDIRSEKNYAVRIACNNGHIDIVKLLISKGANIRDYDNCAIKWASENGHIEIVKILVSQGYDSTSNFNEPVILAVKNGHLEVVKYLVSQSDRCRNNSAIISAAENGHIEIVKFLASRGSNIRIDDDYTIRIASGNGHLEVVKFLVSKGCNIRSEIDHAVQWASTNGHLEVVEYLVSQGADIKSEYDRSVRCASQNGHIEVVKYLVSQGANIRNINDYAVRYASENGHIEVVEYLVSQGANIRVDNDSPLLRACLKGHIKVVKFLVSSGADIRVNNYQPLLIAAGNGHLEILKYLVSQGVNVSIINVPLVGIACIDGYGYFEIVKYLVSIGADINLADDMAIRLASEYGHLDIVKYLVENGANVRAENDYAIKQAHRKGHQEVVNYLLSKGAILS.

ANK repeat units follow at residues Thr-78–Ser-107, Arg-108–Ser-137, Lys-139–Asp-167, Asp-169–Ser-197, Asn-198–Asn-227, Ser-229–Ile-255, Asp-256–Ser-285, Glu-286–Ser-315, Tyr-317–Asn-345, Ile-346–Val-375, Asp-376–Val-405, Asn-406–Ile-435, Asn-437–Leu-467, Ala-468–Ala-497, and Asn-499–Ser-526.

The chain is Putative ankyrin repeat protein R840 from Acanthamoeba polyphaga (Amoeba).